The sequence spans 179 residues: Replication restart protein DnaT (179 aa).

A disordered region spans residues 155–179; that stretch reads NGGLPKRDVNTVSEPDSQIPPGFRG.

Belongs to the DnaT family. In terms of assembly, homooligomerizes. Interacts with PriB. Component of the replication restart primosome. Primosome assembly occurs via a 'hand-off' mechanism. PriA binds to replication forks, subsequently PriB then DnaT bind; DnaT then displaces ssDNA to generate the helicase loading substrate.

In terms of biological role, involved in the restart of stalled replication forks, which reloads the replicative helicase on sites other than the origin of replication. Can function in multiple replication restart pathways. Displaces ssDNA from a PriB-ssDNA complex. Probably forms a spiral filament on ssDNA. The protein is Replication restart protein DnaT of Escherichia coli O8 (strain IAI1).